The primary structure comprises 109 residues: MSEFKRISPQQAQELRSNGAVVVDIRDPQSFALGHISGSRHLDNHSLHDFITHADLDAPLIVSCYHGNSSQSAAAYLAGQGFSEVYSLDGGFELWRATFPSETAQGSEE.

One can recognise a Rhodanese domain in the interval 16 to 104 (RSNGAVVVDI…WRATFPSETA (89 aa)). The active-site Cysteine persulfide intermediate is the Cys-64.

Belongs to the GlpE family.

The protein resides in the cytoplasm. The enzyme catalyses thiosulfate + hydrogen cyanide = thiocyanate + sulfite + 2 H(+). It catalyses the reaction thiosulfate + [thioredoxin]-dithiol = [thioredoxin]-disulfide + hydrogen sulfide + sulfite + 2 H(+). Transferase that catalyzes the transfer of sulfur from thiosulfate to thiophilic acceptors such as cyanide or dithiols. May function in a CysM-independent thiosulfate assimilation pathway by catalyzing the conversion of thiosulfate to sulfite, which can then be used for L-cysteine biosynthesis. This is Thiosulfate sulfurtransferase GlpE from Ectopseudomonas mendocina (strain ymp) (Pseudomonas mendocina).